Consider the following 956-residue polypeptide: MAM domain-containing glycosylphosphatidylinositol anchor protein 1 (956 aa).

The first 18 residues, 1–18 (MEVTCLLLLALIPFHCRG), serve as a signal peptide directing secretion. Ig-like domains lie at 24-123 (PAQA…KSIR) and 132-230 (PVLT…KSIT). Residue asparagine 42 is glycosylated (N-linked (GlcNAc...) asparagine). 2 disulfide bridges follow: cysteine 60-cysteine 108 and cysteine 157-cysteine 214. N-linked (GlcNAc...) asparagine glycosylation is found at asparagine 235, asparagine 257, and asparagine 307. 4 Ig-like domains span residues 240-323 (PTLK…KTVN), 338-432 (PDMI…VEVN), 440-534 (PTIS…VQLT), and 539-632 (PEVE…FQVS). Disulfide bonds link cysteine 262-cysteine 308, cysteine 357-cysteine 415, cysteine 463-cysteine 514, and cysteine 560-cysteine 616. The 101-residue stretch at 644-744 (TPNPTRSHKL…SRVIHYTEPI (101 aa)) folds into the Fibronectin type-III domain. Residues 752-919 (NTCHFEDEKI…VTLKKGECPR (168 aa)) enclose the MAM domain. A compositionally biased stretch (polar residues) spans 780 to 789 (LTQNPKRSPN). Residues 780–799 (LTQNPKRSPNTGPPTDISGT) are disordered. Residue serine 933 is the site of GPI-anchor amidated serine attachment. Residues 934–956 (GAPRLSSLQLWGSMTIFLLALQR) constitute a propeptide, removed in mature form.

In terms of assembly, interacts heterophilically through its MAM domain with proteins in axon-rich regions and through its Ig-like domains with proteins in differentiating muscle. Interacts (through the Ig-like domains) with NLGN2. High levels detected in developing central and peripheral nervous systems with little expression elsewhere. In brain, highest levels in cerebral cortex and hindbrain at E15. At postnatal day 1, highest levels in basilar pons and superficial layers of the neocortex. In the developing spinal cord, restricted to a subpopulation of neurons in the dorsal and spinal ventral cord, probably D1 interneurons. Expressed in brain.

The protein resides in the cell membrane. Functionally, required for radial migration of cortical neurons in the superficial layer of the neocortex. Plays a role in the formation or maintenance of inhibitory synapses. May function by inhibiting the activity of NLGN2. The protein is MAM domain-containing glycosylphosphatidylinositol anchor protein 1 (Mdga1) of Rattus norvegicus (Rat).